The primary structure comprises 354 residues: Uroporphyrinogen decarboxylase (354 aa).

Substrate-binding positions include arginine 27–arginine 31, aspartate 77, tyrosine 154, threonine 209, and histidine 327.

Belongs to the uroporphyrinogen decarboxylase family. In terms of assembly, homodimer.

The protein resides in the cytoplasm. It catalyses the reaction uroporphyrinogen III + 4 H(+) = coproporphyrinogen III + 4 CO2. Its pathway is porphyrin-containing compound metabolism; protoporphyrin-IX biosynthesis; coproporphyrinogen-III from 5-aminolevulinate: step 4/4. In terms of biological role, catalyzes the decarboxylation of four acetate groups of uroporphyrinogen-III to yield coproporphyrinogen-III. The sequence is that of Uroporphyrinogen decarboxylase from Pseudomonas putida (strain ATCC 700007 / DSM 6899 / JCM 31910 / BCRC 17059 / LMG 24140 / F1).